The chain runs to 548 residues: uncharacterized protein (548 aa).

The DhaL domain maps to 8-200; it reads KLFADMIIQG…LLCVYEGFLK (193 aa).

This is an uncharacterized protein from Staphylococcus aureus (strain MRSA252).